The chain runs to 434 residues: UDP-glucose 6-dehydrogenase (434 aa).

Residues 2–19, V11, D30, K35, T121, and E152 each bind NAD(+); that span reads NITF…GVMM. Substrate is bound by residues 148 to 152, K204, N208, 249 to 253, and G257; these read EFLRE and FLNAG. C260 (nucleophile) is an active-site residue. An NAD(+)-binding site is contributed by K263. Substrate is bound at residue K321. R328 is a binding site for NAD(+).

It belongs to the UDP-glucose/GDP-mannose dehydrogenase family.

It carries out the reaction UDP-alpha-D-glucose + 2 NAD(+) + H2O = UDP-alpha-D-glucuronate + 2 NADH + 3 H(+). It functions in the pathway nucleotide-sugar biosynthesis; UDP-alpha-D-glucuronate biosynthesis; UDP-alpha-D-glucuronate from UDP-alpha-D-glucose: step 1/1. This chain is UDP-glucose 6-dehydrogenase (udg), found in Rickettsia bellii (strain RML369-C).